Reading from the N-terminus, the 554-residue chain is L-ascorbate oxidase homolog (554 aa).

A signal peptide spans 1 to 21; the sequence is MGSGKVTFVALLLCLSVGVIA. 2 consecutive Plastocyanin-like domains span residues 22–143 and 196–296; these read EDPY…LNVH and SAKV…AIIR. Residues Asn31, Asn59, and Asn108 are each glycosylated (N-linked (GlcNAc...) asparagine). Cys101 and Cys540 are disulfide-bonded. Asn332, Asn352, and Asn423 each carry an N-linked (GlcNAc...) asparagine glycan. The Plastocyanin-like 3 domain occupies 411-521; the sequence is DPSKLTIATN…LGEQLYFSVL (111 aa).

The protein belongs to the multicopper oxidase family. Pollen.

Its subcellular location is the secreted. It is found in the extracellular space. In terms of biological role, probable oxidoreductase that may be involved in pollen tube growth. The polypeptide is L-ascorbate oxidase homolog (Nicotiana tabacum (Common tobacco)).